Reading from the N-terminus, the 122-residue chain is UPF0102 protein XAC0764 (122 aa).

Belongs to the UPF0102 family.

The chain is UPF0102 protein XAC0764 from Xanthomonas axonopodis pv. citri (strain 306).